Reading from the N-terminus, the 106-residue chain is Small ribosomal subunit protein uS10 (106 aa).

This sequence belongs to the universal ribosomal protein uS10 family. As to quaternary structure, part of the 30S ribosomal subunit.

Its function is as follows. Involved in the binding of tRNA to the ribosomes. The protein is Small ribosomal subunit protein uS10 of Prochlorococcus marinus (strain MIT 9515).